Consider the following 172-residue polypeptide: uncharacterized protein (172 aa).

Residues 1 to 101 (MEHVSKRSIG…RYDINTRPLV (101 aa)) lie on the Lumenal side of the membrane. A helical membrane pass occupies residues 102–122 (VVLAISIVFFGCLLVLKDIII). Topologically, residues 123–145 (QSSENILSVSKWKIIGASFMGTP) are cytoplasmic. Residues 146-164 (YTGLLTGLVGPLLSPFSAV) form a helical membrane-spanning segment. The Lumenal portion of the chain corresponds to 165 to 172 (SSWLSFIF).

It localises to the endoplasmic reticulum membrane. This is an uncharacterized protein from Saccharomyces cerevisiae (strain ATCC 204508 / S288c) (Baker's yeast).